Here is a 1314-residue protein sequence, read N- to C-terminus: Tetratricopeptide repeat protein 21A (1314 aa).

TPR repeat units follow at residues 110-143, 214-247, 326-359, 494-527, 529-561, 565-598, 616-649, 721-754, 755-788, 790-821, 831-863, 883-916, 918-950, 951-984, 986-1018, 1022-1055, 1195-1228, 1230-1262, and 1264-1297; these read STAL…SSGS, LPAL…DENN, ALVA…EENR, MEPL…DPTF, DAHL…NFQV, PLYH…PTSK, ASIL…FSGT, PHSS…NPHD, ASLV…SGQD, LCCE…DSGV, VKCL…QSRI, ASIC…SPTD, KVVL…EQTH, ERAA…APDN, LVLN…SSRV, PGFN…STWG, EKSW…NKSC, RAYE…SHQA, and PAIG…HPKY.

This sequence belongs to the TTC21 family. As to quaternary structure, interacts with IFT20. Interacts with IFT52. Interacts with IFT140. Interacts with CEP78; regulating IFT20 stability and localization.

Intraflagellar transport (IFT)-associated protein required for spermatogenesis. Required for sperm flagellar formation and intraflagellar transport. This is Tetratricopeptide repeat protein 21A (Ttc21a) from Mus musculus (Mouse).